A 251-amino-acid polypeptide reads, in one-letter code: 2-C-methyl-D-erythritol 4-phosphate cytidylyltransferase (251 aa).

The protein belongs to the IspD/TarI cytidylyltransferase family. IspD subfamily.

It carries out the reaction 2-C-methyl-D-erythritol 4-phosphate + CTP + H(+) = 4-CDP-2-C-methyl-D-erythritol + diphosphate. It functions in the pathway isoprenoid biosynthesis; isopentenyl diphosphate biosynthesis via DXP pathway; isopentenyl diphosphate from 1-deoxy-D-xylulose 5-phosphate: step 2/6. In terms of biological role, catalyzes the formation of 4-diphosphocytidyl-2-C-methyl-D-erythritol from CTP and 2-C-methyl-D-erythritol 4-phosphate (MEP). This Cupriavidus pinatubonensis (strain JMP 134 / LMG 1197) (Cupriavidus necator (strain JMP 134)) protein is 2-C-methyl-D-erythritol 4-phosphate cytidylyltransferase.